Reading from the N-terminus, the 562-residue chain is Eukaryotic translation initiation factor 3 subunit L (562 aa).

The region spanning D329 to R535 is the PCI domain.

It belongs to the eIF-3 subunit L family. In terms of assembly, component of the eukaryotic translation initiation factor 3 (eIF-3) complex, which is composed of 13 subunits: eif3a, eif3b, eif3c, eif3d, eif3e, eif3f, eif3g, eif3h, eif3i, eif3j, eif3k, eif3l and eif3m.

Its subcellular location is the cytoplasm. Component of the eukaryotic translation initiation factor 3 (eIF-3) complex, which is involved in protein synthesis of a specialized repertoire of mRNAs and, together with other initiation factors, stimulates binding of mRNA and methionyl-tRNAi to the 40S ribosome. The eIF-3 complex specifically targets and initiates translation of a subset of mRNAs involved in cell proliferation. This is Eukaryotic translation initiation factor 3 subunit L (eif3l) from Xenopus tropicalis (Western clawed frog).